Here is a 241-residue protein sequence, read N- to C-terminus: 1-(5-phosphoribosyl)-5-[(5-phosphoribosylamino)methylideneamino] imidazole-4-carboxamide isomerase (241 aa).

Asp8 functions as the Proton acceptor in the catalytic mechanism. The active-site Proton donor is the Asp131.

This sequence belongs to the HisA/HisF family.

Its subcellular location is the cytoplasm. The enzyme catalyses 1-(5-phospho-beta-D-ribosyl)-5-[(5-phospho-beta-D-ribosylamino)methylideneamino]imidazole-4-carboxamide = 5-[(5-phospho-1-deoxy-D-ribulos-1-ylimino)methylamino]-1-(5-phospho-beta-D-ribosyl)imidazole-4-carboxamide. The protein operates within amino-acid biosynthesis; L-histidine biosynthesis; L-histidine from 5-phospho-alpha-D-ribose 1-diphosphate: step 4/9. This chain is 1-(5-phosphoribosyl)-5-[(5-phosphoribosylamino)methylideneamino] imidazole-4-carboxamide isomerase, found in Sorangium cellulosum (strain So ce56) (Polyangium cellulosum (strain So ce56)).